The primary structure comprises 176 residues: SsrA-binding protein (176 aa).

Positions 1–33 (MTEAGAKKAAGKKSGKGKGKNAKKNQPNITPVA) are disordered. A compositionally biased stretch (basic residues) spans 9-23 (AAGKKSGKGKGKNAK).

The protein belongs to the SmpB family.

The protein localises to the cytoplasm. Functionally, required for rescue of stalled ribosomes mediated by trans-translation. Binds to transfer-messenger RNA (tmRNA), required for stable association of tmRNA with ribosomes. tmRNA and SmpB together mimic tRNA shape, replacing the anticodon stem-loop with SmpB. tmRNA is encoded by the ssrA gene; the 2 termini fold to resemble tRNA(Ala) and it encodes a 'tag peptide', a short internal open reading frame. During trans-translation Ala-aminoacylated tmRNA acts like a tRNA, entering the A-site of stalled ribosomes, displacing the stalled mRNA. The ribosome then switches to translate the ORF on the tmRNA; the nascent peptide is terminated with the 'tag peptide' encoded by the tmRNA and targeted for degradation. The ribosome is freed to recommence translation, which seems to be the essential function of trans-translation. In Rhodopirellula baltica (strain DSM 10527 / NCIMB 13988 / SH1), this protein is SsrA-binding protein.